The primary structure comprises 105 residues: Cuticle protein AMP1A (105 aa).

The segment at 1–21 is disordered; that stretch reads DRDAQTLTDERSDQGDGNFRY. A Chitin-binding type R&amp;R domain is found at 16–81; sequence DGNFRYEFET…PSSDLLPVGP (66 aa).

Arthrodial membrane.

The chain is Cuticle protein AMP1A from Homarus americanus (American lobster).